The sequence spans 36 residues: Insecticidal toxin LaIT1 (36 aa).

2 disulfide bridges follow: Cys11–Cys23 and Cys17–Cys29.

In terms of tissue distribution, expressed by the venom gland.

The protein resides in the secreted. Affects the activity of both ryanodine-sensitive calcium-release channels RyR1 and RyR2 with high potency. At lower concentrations the toxin increases full openings of the RyRs, and at higher concentrations it inhibits full openings and induce openings to subconductance levels and reduces the number of full conductance openings. The different actions may be attributed to the toxins binding at different sites on the RyRs, with binding at a high-affinity site mediating the increase in full openings and the induction of subconductance states evoked upon binding to a lower-affinity site. Shows insect lethality against crickets and common cutworms (only shows paralysis against cockroaches), but no toxicity is observed in mice. The sequence is that of Insecticidal toxin LaIT1 from Liocheles australasiae (Dwarf wood scorpion).